The sequence spans 343 residues: uncharacterized protein (343 aa).

This is an uncharacterized protein from Saccharolobus islandicus (Sulfolobus islandicus).